Reading from the N-terminus, the 421-residue chain is O-acetyl-L-homoserine sulfhydrylase 1 (421 aa).

Lys-206 bears the N6-(pyridoxal phosphate)lysine mark.

Belongs to the trans-sulfuration enzymes family. As to quaternary structure, homotetramer. Pyridoxal 5'-phosphate serves as cofactor.

The catalysed reaction is O-acetyl-L-homoserine + hydrogen sulfide = L-homocysteine + acetate. It participates in amino-acid biosynthesis; L-methionine biosynthesis via de novo pathway; L-homocysteine from O-acetyl-L-homoserine: step 1/1. Its activity is regulated as follows. Inhibited by the carbonyl reagents hydroxylamine and phenylhydrazine. Also inhibited by methionine and propargylglycine. In terms of biological role, catalyzes the conversion of O-acetyl-L-homoserine (OAH) into homocysteine in the methionine biosynthesis pathway. Has weak activity with O-acetyl-L-serine, O-phospho-L-serine, L-serine, O-succinyl-L-homoserine and L-homoserine. Shows low CTT beta-lyase activity and very low CTT gamma-synthase activity. The protein is O-acetyl-L-homoserine sulfhydrylase 1 of Thermus thermophilus (strain ATCC 27634 / DSM 579 / HB8).